The following is a 268-amino-acid chain: Receptor expression-enhancing protein 2 (268 aa).

2 helical membrane passes run 1-21 (MVSWIISRMVVLAFGTLYPAY) and 35-55 (YVKWMMYWIVFALFTTAETIT). The segment at 170 to 268 (GDDTHTAATL…TTANNVAESP (99 aa)) is disordered. Positions 180-196 (PRAKTATRTVRATPVPA) are enriched in low complexity. Positions 199 to 216 (ESQHSSRSDDQSDSRTEH) are enriched in basic and acidic residues. Over residues 228 to 248 (RIAITRAAKKPAAAKTEQTTK) the composition is skewed to low complexity. Positions 249 to 258 (TVKKAPKKKP) are enriched in basic residues.

It belongs to the DP1 family. In terms of assembly, interacts with odorant receptor proteins.

It localises to the membrane. May enhance the cell surface expression of odorant receptors. The protein is Receptor expression-enhancing protein 2 (reep2) of Danio rerio (Zebrafish).